The following is a 393-amino-acid chain: Acetylornithine aminotransferase (393 aa).

Pyridoxal 5'-phosphate-binding positions include G96 to T97 and F129. N(2)-acetyl-L-ornithine is bound at residue R132. Residue D214–Q217 participates in pyridoxal 5'-phosphate binding. K243 is modified (N6-(pyridoxal phosphate)lysine). S271 is a binding site for N(2)-acetyl-L-ornithine. T272 lines the pyridoxal 5'-phosphate pocket.

The protein belongs to the class-III pyridoxal-phosphate-dependent aminotransferase family. ArgD subfamily. In terms of assembly, homodimer. Requires pyridoxal 5'-phosphate as cofactor.

The protein localises to the cytoplasm. The catalysed reaction is N(2)-acetyl-L-ornithine + 2-oxoglutarate = N-acetyl-L-glutamate 5-semialdehyde + L-glutamate. The protein operates within amino-acid biosynthesis; L-arginine biosynthesis; N(2)-acetyl-L-ornithine from L-glutamate: step 4/4. This Rhodobacter capsulatus (strain ATCC BAA-309 / NBRC 16581 / SB1003) protein is Acetylornithine aminotransferase.